A 258-amino-acid polypeptide reads, in one-letter code: Probable enoyl-CoA hydratase (258 aa).

This sequence belongs to the enoyl-CoA hydratase/isomerase family.

The enzyme catalyses a (3S)-3-hydroxyacyl-CoA = a (2E)-enoyl-CoA + H2O. It carries out the reaction a 4-saturated-(3S)-3-hydroxyacyl-CoA = a (3E)-enoyl-CoA + H2O. The protein operates within lipid metabolism; fatty acid beta-oxidation. Functionally, involved in the degradation of long-chain fatty acids. In Bacillus subtilis (strain 168), this protein is Probable enoyl-CoA hydratase (fadB).